Reading from the N-terminus, the 563-residue chain is Coiled-coil domain-containing protein 63 (563 aa).

The segment at 1-29 (MSVLKKNRRKDSDTPQEPSEKAKEQQAEA) is disordered. The segment covering 10-29 (KDSDTPQEPSEKAKEQQAEA) has biased composition (basic and acidic residues). 3 coiled-coil regions span residues 18 to 201 (PSEK…QLQH), 233 to 291 (AMKD…AKKH), and 341 to 422 (TELN…KKIN).

Its function is as follows. Plays a role in spermiogenesis. Involved in the elongation of flagella and the formation of sperm heads. The polypeptide is Coiled-coil domain-containing protein 63 (Homo sapiens (Human)).